Consider the following 435-residue polypeptide: F-box/FBD/LRR-repeat protein At1g51370 (435 aa).

The region spanning 18–64 (EDRISQLPEPLISEILFHLSTKDSVRTSALSTKWRYLWQSVPGLDLD) is the F-box domain. LRR repeat units follow at residues 123-148 (VHCFHDNKIPLSIYTCTTLVHLRLRW), 170-195 (VSYPNETTLQKLISGSPVLEELILFS), 234-259 (AKMYSTKNFQIISSGFPAKLDIDFVN), 262-287 (GRYQKKKVIEDILIDISRVRDLVISS), and 314-340 (RFYISDLEMLPTLLESCPKLESLILEM). The 53-residue stretch at 354–406 (EPNVMVSTVPWCLVSSLKFVELKRSIPRYEGEMELVRYVLTNSTVLKKLRLNV) folds into the FBD domain.

This chain is F-box/FBD/LRR-repeat protein At1g51370, found in Arabidopsis thaliana (Mouse-ear cress).